A 544-amino-acid polypeptide reads, in one-letter code: Chaperonin GroEL 1 (544 aa).

Residues 30–33 (TLGP), Lys-51, 87–91 (DGTTT), Gly-415, 479–481 (NAA), and Asp-495 contribute to the ATP site.

Belongs to the chaperonin (HSP60) family. As to quaternary structure, forms a cylinder of 14 subunits composed of two heptameric rings stacked back-to-back. Interacts with the co-chaperonin GroES.

It localises to the cytoplasm. It catalyses the reaction ATP + H2O + a folded polypeptide = ADP + phosphate + an unfolded polypeptide.. In terms of biological role, together with its co-chaperonin GroES, plays an essential role in assisting protein folding. The GroEL-GroES system forms a nano-cage that allows encapsulation of the non-native substrate proteins and provides a physical environment optimized to promote and accelerate protein folding. This Vibrio cholerae serotype O1 (strain ATCC 39315 / El Tor Inaba N16961) protein is Chaperonin GroEL 1.